A 507-amino-acid polypeptide reads, in one-letter code: ATP synthase subunit alpha, plastid (507 aa).

Residue 170–177 (GDRQTGKT) participates in ATP binding.

The protein belongs to the ATPase alpha/beta chains family. F-type ATPases have 2 components, CF(1) - the catalytic core - and CF(0) - the membrane proton channel. CF(1) has five subunits: alpha(3), beta(3), gamma(1), delta(1), epsilon(1). CF(0) has four main subunits: a, b, b' and c.

Its subcellular location is the plastid membrane. It carries out the reaction ATP + H2O + 4 H(+)(in) = ADP + phosphate + 5 H(+)(out). Produces ATP from ADP in the presence of a proton gradient across the membrane. The alpha chain is a regulatory subunit. This Cuscuta obtusiflora (Peruvian dodder) protein is ATP synthase subunit alpha, plastid.